The following is a 443-amino-acid chain: Lysine-specific demethylase 8 (443 aa).

Over residues 139-165 the composition is skewed to basic and acidic residues; sequence TKLEAERGVREPGLESSKLHSPGEHSN. Residues 139-174 form a disordered region; sequence TKLEAERGVREPGLESSKLHSPGEHSNKKSFASVTG. A JmjC domain is found at 298–443; sequence GYLAQHQLFE…LSFSVSFWWS (146 aa). The Fe cation site is built by H348, D350, and H427.

Fe(2+) serves as cofactor.

It is found in the nucleus. The enzyme catalyses N(6),N(6)-dimethyl-L-lysyl(36)-[histone H3] + 2 2-oxoglutarate + 2 O2 = L-lysyl(36)-[histone H3] + 2 formaldehyde + 2 succinate + 2 CO2. In terms of biological role, histone demethylase required for G2/M phase cell cycle progression. Specifically demethylates dimethylated 'Lys-36' (H3K36me2) of histone H3, an epigenetic repressive mark, thereby acting as a transcription activator. May play a role in the regulation of the circadian clock. In Xenopus tropicalis (Western clawed frog), this protein is Lysine-specific demethylase 8 (kdm8).